A 320-amino-acid chain; its full sequence is Dual oxidase maturation factor 2 (320 aa).

The Extracellular segment spans residues Met1–Ser21. Residues Val22 to Leu42 form a helical membrane-spanning segment. The Cytoplasmic portion of the chain corresponds to Pro43–Arg56. The helical transmembrane segment at Val57–Phe77 threads the bilayer. Topologically, residues Val78–Thr183 are extracellular. Asn84, Asn109, and Asn121 each carry an N-linked (GlcNAc...) asparagine glycan. Residues Leu184–Leu204 traverse the membrane as a helical segment. The Cytoplasmic segment spans residues Tyr205 to Gly206. A helical membrane pass occupies residues Gly207 to Ile227. Residues Ser228–Gly247 are Extracellular-facing. Residues Ala248–Val268 traverse the membrane as a helical segment. Topologically, residues Ser269 to Leu320 are cytoplasmic.

The protein belongs to the DUOXA family. In terms of assembly, heterodimer with DUXA2; disulfide-linked. Interacts with CSNK1G2. In terms of processing, N-glycosylated. Specifically expressed in thyroid. Also detected in salivary glands.

Its subcellular location is the endoplasmic reticulum membrane. Functionally, required for the maturation and the transport from the endoplasmic reticulum to the plasma membrane of functional DUOX2. May play a role in thyroid hormone synthesis. This is Dual oxidase maturation factor 2 (DUOXA2) from Homo sapiens (Human).